A 297-amino-acid chain; its full sequence is MPELPEVEVTRRGLLPHVVGRRIADVIVRHRGLRWPVEPELEARLTGRIIGRIERRGKYLLLECLPPADATRAGTGEDAAPGWLLVHLGMTGTLRVYPAPPAPGAHDHLDLLLAAGPDTAEAEPVVLRFRDPRRFGAILWTPLAESDLPGHPLLSRLGIEPFDPRFDGAWLHRGMRGRSMAIKQALLAGDVVVGVGNIYCSESLFRAGIRPTTQAGRLSLARCEKLAVAVRETLAEAIARGGSTLRDFVGSDGSSGYFQLDCFVYDRAGEPCRICGTPIRQILQGQRSTFYCPHCQH.

The Schiff-base intermediate with DNA role is filled by Pro2. Glu3 functions as the Proton donor in the catalytic mechanism. The Proton donor; for beta-elimination activity role is filled by Lys58. DNA contacts are provided by His106, Arg133, and Arg178. The segment at 263–297 adopts an FPG-type zinc-finger fold; it reads FVYDRAGEPCRICGTPIRQILQGQRSTFYCPHCQH. The Proton donor; for delta-elimination activity role is filled by Arg287.

Belongs to the FPG family. Monomer. It depends on Zn(2+) as a cofactor.

The catalysed reaction is Hydrolysis of DNA containing ring-opened 7-methylguanine residues, releasing 2,6-diamino-4-hydroxy-5-(N-methyl)formamidopyrimidine.. It carries out the reaction 2'-deoxyribonucleotide-(2'-deoxyribose 5'-phosphate)-2'-deoxyribonucleotide-DNA = a 3'-end 2'-deoxyribonucleotide-(2,3-dehydro-2,3-deoxyribose 5'-phosphate)-DNA + a 5'-end 5'-phospho-2'-deoxyribonucleoside-DNA + H(+). In terms of biological role, involved in base excision repair of DNA damaged by oxidation or by mutagenic agents. Acts as a DNA glycosylase that recognizes and removes damaged bases. Has a preference for oxidized purines, such as 7,8-dihydro-8-oxoguanine (8-oxoG). Has AP (apurinic/apyrimidinic) lyase activity and introduces nicks in the DNA strand. Cleaves the DNA backbone by beta-delta elimination to generate a single-strand break at the site of the removed base with both 3'- and 5'-phosphates. In Cupriavidus metallidurans (strain ATCC 43123 / DSM 2839 / NBRC 102507 / CH34) (Ralstonia metallidurans), this protein is Formamidopyrimidine-DNA glycosylase.